A 793-amino-acid chain; its full sequence is Potassium transporter 18 (793 aa).

Residues 1 to 53 (METRTNEYSRKGAMWELERNLDQPMDAEAGRLRNMYREKTYPTILLLRLAFQS) lie on the Cytoplasmic side of the membrane. Residues 54-74 (LGVVFGDLGTSPLYVFYNIFP) traverse the membrane as a helical segment. The Extracellular segment spans residues 75 to 86 (HGIEDTEQVIGA). A helical transmembrane segment spans residues 87 to 107 (LSLIIYSLTLIPLVKYVFIVL). The Cytoplasmic segment spans residues 108 to 172 (RANDNGQGGT…WLEGHQFRKN (65 aa)). A helical membrane pass occupies residues 173 to 193 (LILILVLFGTCMAVGDGILTP). Residues 194–214 (AISVLSATGGIQVEEGRMRND) lie on the Extracellular side of the membrane. Residues 215–235 (VVVIISVLILIGLFSMQHYGT) traverse the membrane as a helical segment. The Cytoplasmic portion of the chain corresponds to 236–237 (DK). The helical transmembrane segment at 238–258 (VSWLFAPIVFVWFILIGILGA) threads the bilayer. The Extracellular segment spans residues 259–287 (VNICKYDHSVLKAFNPVYVYRYFKRGKTS). The helical transmembrane segment at 288 to 308 (WTSLGGIMLSITGTEALFADL) threads the bilayer. Position 309 (Ser-309) is a topological domain, cytoplasmic. The helical transmembrane segment at 310–330 (YFPVQAIQIAFTVVVFPCLLL) threads the bilayer. Residues 331–351 (QYTGQAAFIAANTNQVSHAFY) lie on the Extracellular side of the membrane. A helical transmembrane segment spans residues 352–372 (ISLPAPILWPAFAVATAAAIV). Residues 373 to 409 (ASQATISATYSIIKQALALGCFPRVKIIHTSKKYLGQ) lie on the Cytoplasmic side of the membrane. A helical membrane pass occupies residues 410–430 (IYSPDINWILMVFCIAVTAGF). The Extracellular segment spans residues 431–442 (KNQSQIANAYGT). The N-linked (GlcNAc...) asparagine glycan is linked to Asn-432. Residues 443–463 (AVIMVMLVTTFLMIPIMLLVW) traverse the membrane as a helical segment. The Cytoplasmic portion of the chain corresponds to 464-468 (RSHWT). The helical transmembrane segment at 469–489 (LVVAFTVLSLLVEIPYFSAVV) threads the bilayer. Residues 490 to 494 (RKIDQ) lie on the Extracellular side of the membrane. Residues 495–515 (GGWVPLVFAAGFMIIMYVWHY) traverse the membrane as a helical segment. The Cytoplasmic segment spans residues 516–793 (GTLKRYEFEM…MLNVGQVFYV (278 aa)).

The protein belongs to the HAK/KUP transporter (TC 2.A.72.3) family.

The protein localises to the membrane. High-affinity potassium transporter. The sequence is that of Potassium transporter 18 (HAK18) from Oryza sativa subsp. japonica (Rice).